We begin with the raw amino-acid sequence, 1141 residues long: MAASRSSSRISFAKIIEPLEVPDLLALQTQSFDWLIGSDAWAERVQEAIDSGRDDVPITSGLEEVFEEISPIEDFSGSMSLSFRDHRFEPPKYSVEECKDKDMTFSAPLFVTAEFTNNTTGEIKSQTVFMGDFPLMTPKGTFVINGTERVVVSQLVRSPGVYFERSLDKASDKDLYSCKVIPSRGAWLEFEIDKRDTVGVRIDRKRRQSVTVLLKALGWDEARILERFGDFPSMRITLEKDHTASQDDALLDIYRKLRPGEPPTRESAQTLLENLFFNPKRYDLAKVGRYKVNKKLTLEIAHDVGVLTEDDIVRTIEYVVKLHAGADPAEYEVDDIDHFGNRRLRTVGELIQNQVRLGLARMERVVRERMTTQDVEAITPQTLINIRPVVASIKEFFGTSQLSQFMDQTNPLAGLTHKRRLSALGPGGLSRERAGFEVRDVHPSHYGRMCPIETPEGPNIGLIGSLSTFARVNPFGFVETPYRKVVNGRVTDQIDYLTADEEDRHVKAQANTPLSPDGTFAEDRVLVRRKGGEVEFIPPDEVDYMDVSPRQMVSVATAMIPFLEHDDANRALMGSNMQRQSVPLLRSEAPLVGTGMEARAAKDAGDVVVCVQAGVVEDLSADYITVMHDDGTRRTYRLAKFRRSNQGTCINQKPIVFEGDRVEAGQVIADGPCTDNGEMALGKNLLVAFMPWEGHNYEDAIILSQRLVQDDVLSSIHIEEHEVDARDTKLGPEEITRDIPNVAEEVLADLDERGIIRIGAEVSPGDVLVGKVTPKGETELTPEERLLRAIFGEKAREVRDTSLKVPHGESGKVIGVRVFSREDGDELPPGVNELVRVYVAQKRKITDGDKLAGRHGNKGVIAKILPQEDMPFLEDGTPVDIVLNPHGVPRRMNIGQILETHLGWVAKTGWQVDAGTEDWKERLRGIGADSSTPGTNVATPVFDGAREEEITGLLDSTLPNRDGVQLIGSSGKATLFDGRTGEPYPYPVAVGYIYILKLLHLVDDKIHARSTGPYSMITQQPLGGKAQFGGQRFGEMEVWALEAYGAAYALQELLTIKSDDVVGRVKVYEAIVKGENIPEPGIPESFKVLIKEMQSLCLNVEVLSSDGVQIEMRDTDEDVFRAAEELGIDLSRREPSSVEEV.

The protein belongs to the RNA polymerase beta chain family. In terms of assembly, the RNAP catalytic core consists of 2 alpha, 1 beta, 1 beta' and 1 omega subunit. When a sigma factor is associated with the core the holoenzyme is formed, which can initiate transcription.

It catalyses the reaction RNA(n) + a ribonucleoside 5'-triphosphate = RNA(n+1) + diphosphate. Its function is as follows. DNA-dependent RNA polymerase catalyzes the transcription of DNA into RNA using the four ribonucleoside triphosphates as substrates. In Frankia alni (strain DSM 45986 / CECT 9034 / ACN14a), this protein is DNA-directed RNA polymerase subunit beta.